The following is a 213-amino-acid chain: Orotate phosphoribosyltransferase (213 aa).

Lys26 is a binding site for 5-phospho-alpha-D-ribose 1-diphosphate. 34-35 contacts orotate; sequence FF. Residues 72-73, Arg99, Lys100, Lys103, His105, and 124-132 each bind 5-phospho-alpha-D-ribose 1-diphosphate; these read YK and DDVITAGTA. Orotate-binding residues include Thr128 and Arg156.

It belongs to the purine/pyrimidine phosphoribosyltransferase family. PyrE subfamily. As to quaternary structure, homodimer. Mg(2+) is required as a cofactor.

The enzyme catalyses orotidine 5'-phosphate + diphosphate = orotate + 5-phospho-alpha-D-ribose 1-diphosphate. It functions in the pathway pyrimidine metabolism; UMP biosynthesis via de novo pathway; UMP from orotate: step 1/2. Functionally, catalyzes the transfer of a ribosyl phosphate group from 5-phosphoribose 1-diphosphate to orotate, leading to the formation of orotidine monophosphate (OMP). In Klebsiella pneumoniae (strain 342), this protein is Orotate phosphoribosyltransferase.